Reading from the N-terminus, the 123-residue chain is Large ribosomal subunit protein bL20 (123 aa).

Belongs to the bacterial ribosomal protein bL20 family.

Functionally, binds directly to 23S ribosomal RNA and is necessary for the in vitro assembly process of the 50S ribosomal subunit. It is not involved in the protein synthesizing functions of that subunit. This chain is Large ribosomal subunit protein bL20 (rplT), found in Chlamydia muridarum (strain MoPn / Nigg).